The following is a 212-amino-acid chain: Phosphoribosylformylglycinamidine synthase subunit PurQ (212 aa).

Residues 2-212 (RIAVLKFPGT…WLGLISWLRR (211 aa)) form the Glutamine amidotransferase type-1 domain. The Nucleophile role is filled by C85. Residues H183, E185, and H191 contribute to the active site.

Part of the FGAM synthase complex composed of 1 PurL, 1 PurQ and 2 PurS subunits.

Its subcellular location is the cytoplasm. The enzyme catalyses N(2)-formyl-N(1)-(5-phospho-beta-D-ribosyl)glycinamide + L-glutamine + ATP + H2O = 2-formamido-N(1)-(5-O-phospho-beta-D-ribosyl)acetamidine + L-glutamate + ADP + phosphate + H(+). The catalysed reaction is L-glutamine + H2O = L-glutamate + NH4(+). The protein operates within purine metabolism; IMP biosynthesis via de novo pathway; 5-amino-1-(5-phospho-D-ribosyl)imidazole from N(2)-formyl-N(1)-(5-phospho-D-ribosyl)glycinamide: step 1/2. Functionally, part of the phosphoribosylformylglycinamidine synthase complex involved in the purines biosynthetic pathway. Catalyzes the ATP-dependent conversion of formylglycinamide ribonucleotide (FGAR) and glutamine to yield formylglycinamidine ribonucleotide (FGAM) and glutamate. The FGAM synthase complex is composed of three subunits. PurQ produces an ammonia molecule by converting glutamine to glutamate. PurL transfers the ammonia molecule to FGAR to form FGAM in an ATP-dependent manner. PurS interacts with PurQ and PurL and is thought to assist in the transfer of the ammonia molecule from PurQ to PurL. In Pyrobaculum aerophilum (strain ATCC 51768 / DSM 7523 / JCM 9630 / CIP 104966 / NBRC 100827 / IM2), this protein is Phosphoribosylformylglycinamidine synthase subunit PurQ.